The primary structure comprises 212 residues: MTSFSTSAFRPVAFSLGLLLVMPAAFPAPVTLGEDSKEVAAPNRQLLTSTERIDKHIWYILDGISALRKEICNKSNMCESSKEALAENNLNLPKMAEKDGCFQSGFNEETCLLKITTGLLEFEVYLEYLQNRFESSKEQAGAVQMSTKGLIQSLQRKAKNLSAIATPDPATNASLLTKLQAQDQWLQGVTTHLILRSFKEFLQCSLRALRQM.

The N-terminal stretch at 1-29 (MTSFSTSAFRPVAFSLGLLLVMPAAFPAP) is a signal peptide. The cysteines at positions 72 and 78 are disulfide-linked. Asn73 is a glycosylation site (N-linked (GlcNAc...) asparagine). Position 81 is a phosphoserine (Ser81). Cysteines 101 and 111 form a disulfide. N-linked (GlcNAc...) asparagine glycosylation is found at Asn160 and Asn172.

It belongs to the IL-6 superfamily. In terms of assembly, component of a hexamer of two molecules each of IL6, IL6R and IL6ST; first binds to IL6R to associate with the signaling subunit IL6ST. Interacts with IL6R (via the N-terminal ectodomain); this interaction may be affected by IL6R-binding with SORL1, hence decreasing IL6 cis signaling. Interacts with SORL1 (via the N-terminal ectodomain); this interaction leads to IL6 internalization and lysosomal degradation. May form a trimeric complex with the soluble SORL1 ectodomain and soluble IL6R receptor; this interaction might stabilize circulating IL6, hence promoting IL6 trans signaling.

Its subcellular location is the secreted. In terms of biological role, cytokine with a wide variety of biological functions in immunity, tissue regeneration, and metabolism. Binds to IL6R, then the complex associates to the signaling subunit IL6ST/gp130 to trigger the intracellular IL6-signaling pathway. The interaction with the membrane-bound IL6R and IL6ST stimulates 'classic signaling', whereas the binding of IL6 and soluble IL6R to IL6ST stimulates 'trans-signaling'. Alternatively, 'cluster signaling' occurs when membrane-bound IL6:IL6R complexes on transmitter cells activate IL6ST receptors on neighboring receiver cells. Functionally, IL6 is a potent inducer of the acute phase response. Rapid production of IL6 contributes to host defense during infection and tissue injury, but excessive IL6 synthesis is involved in disease pathology. In the innate immune response, is synthesized by myeloid cells, such as macrophages and dendritic cells, upon recognition of pathogens through toll-like receptors (TLRs) at the site of infection or tissue injury. In the adaptive immune response, is required for the differentiation of B cells into immunoglobulin-secreting cells. Plays a major role in the differentiation of CD4(+) T cell subsets. Essential factor for the development of T follicular helper (Tfh) cells that are required for the induction of germinal-center formation. Required to drive naive CD4(+) T cells to the Th17 lineage. Also required for proliferation of myeloma cells and the survival of plasmablast cells. Acts as an essential factor in bone homeostasis and on vessels directly or indirectly by induction of VEGF, resulting in increased angiogenesis activity and vascular permeability. Induces, through 'trans-signaling' and synergistically with IL1B and TNF, the production of VEGF. Involved in metabolic controls, is discharged into the bloodstream after muscle contraction increasing lipolysis and improving insulin resistance. 'Trans-signaling' in central nervous system also regulates energy and glucose homeostasis. Mediates, through GLP-1, crosstalk between insulin-sensitive tissues, intestinal L cells and pancreatic islets to adapt to changes in insulin demand. Also acts as a myokine. Plays a protective role during liver injury, being required for maintenance of tissue regeneration. Also has a pivotal role in iron metabolism by regulating HAMP/hepcidin expression upon inflammation or bacterial infection. Through activation of IL6ST-YAP-NOTCH pathway, induces inflammation-induced epithelial regeneration. The polypeptide is Interleukin-6 (IL6) (Saimiri sciureus (Common squirrel monkey)).